Reading from the N-terminus, the 762-residue chain is 5-methyltetrahydropteroyltriglutamate--homocysteine methyltransferase (762 aa).

Residues 16–19 (RELK) and lysine 118 each bind 5-methyltetrahydropteroyltri-L-glutamate. L-homocysteine is bound by residues 439-441 (IGS) and glutamate 492. L-methionine is bound by residues 439-441 (IGS) and glutamate 492. 5-methyltetrahydropteroyltri-L-glutamate contacts are provided by residues 523–524 (RC) and tryptophan 569. Aspartate 607 contacts L-homocysteine. Aspartate 607 provides a ligand contact to L-methionine. Glutamate 613 serves as a coordination point for 5-methyltetrahydropteroyltri-L-glutamate. The Zn(2+) site is built by histidine 649, cysteine 651, and glutamate 673. Residue histidine 702 is the Proton donor of the active site. Cysteine 734 serves as a coordination point for Zn(2+).

The protein belongs to the vitamin-B12 independent methionine synthase family. Zn(2+) serves as cofactor.

It carries out the reaction 5-methyltetrahydropteroyltri-L-glutamate + L-homocysteine = tetrahydropteroyltri-L-glutamate + L-methionine. The protein operates within amino-acid biosynthesis; L-methionine biosynthesis via de novo pathway; L-methionine from L-homocysteine (MetE route): step 1/1. Catalyzes the transfer of a methyl group from 5-methyltetrahydrofolate to homocysteine resulting in methionine formation. This is 5-methyltetrahydropteroyltriglutamate--homocysteine methyltransferase from Pseudomonas entomophila (strain L48).